Here is a 451-residue protein sequence, read N- to C-terminus: Trigger factor (451 aa).

Positions 171–256 (GDRVKVNFKG…ATAIEAPEDK (86 aa)) constitute a PPIase FKBP-type domain.

The protein belongs to the FKBP-type PPIase family. Tig subfamily.

The protein localises to the cytoplasm. The catalysed reaction is [protein]-peptidylproline (omega=180) = [protein]-peptidylproline (omega=0). Involved in protein export. Acts as a chaperone by maintaining the newly synthesized protein in an open conformation. Functions as a peptidyl-prolyl cis-trans isomerase. The polypeptide is Trigger factor (Bradyrhizobium sp. (strain ORS 278)).